Reading from the N-terminus, the 196-residue chain is GTP cyclohydrolase 1 (196 aa).

The Zn(2+) site is built by Cys86, His89, and Cys158.

It belongs to the GTP cyclohydrolase I family. As to quaternary structure, toroid-shaped homodecamer, composed of two pentamers of five dimers.

It catalyses the reaction GTP + H2O = 7,8-dihydroneopterin 3'-triphosphate + formate + H(+). It participates in cofactor biosynthesis; 7,8-dihydroneopterin triphosphate biosynthesis; 7,8-dihydroneopterin triphosphate from GTP: step 1/1. The sequence is that of GTP cyclohydrolase 1 from Clostridium botulinum (strain Langeland / NCTC 10281 / Type F).